The primary structure comprises 384 residues: DNA dC-&gt;dU-editing enzyme APOBEC-3G (384 aa).

Positions 1-60 (MNPQFRNMVDGMDPHKFSYNFKNRPILSRRNTVWLCYEVKTKGPSRPPLDAKIFRGQVYF) are essential for cytoplasmic localization. CMP/dCMP-type deaminase domains lie at 29-138 (RRNT…LRSL) and 214-328 (GRHE…LRTL). A Phosphothreonine; by PKA modification is found at threonine 32. Histidine 65, cysteine 97, and cysteine 100 together coordinate Zn(2+). The interval 209–336 (EPCVEGRHET…TLDEAEAKIS (128 aa)) is necessary for homooligomerization. The tract at residues 213 to 215 (EGR) is interaction with DNA. Threonine 218 carries the phosphothreonine; by PKA and CAMK2 modification. Histidine 257 is a Zn(2+) binding site. Glutamate 259 acts as the Proton donor in catalysis. The Zn(2+) site is built by cysteine 288 and cysteine 291. The interval 313–320 (RIYDDQGR) is interaction with DNA.

It belongs to the cytidine and deoxycytidylate deaminase family. In terms of assembly, homodimer. Zn(2+) is required as a cofactor.

It localises to the cytoplasm. The protein localises to the nucleus. It is found in the P-body. It carries out the reaction a 2'-deoxycytidine in single-stranded DNA + H2O + H(+) = a 2'-deoxyuridine in single-stranded DNA + NH4(+). Functionally, DNA deaminase (cytidine deaminase) which acts as an inhibitor of retrovirus replication and retrotransposon mobility. After the penetration of retroviral nucleocapsids into target cells of infection and the initiation of reverse transcription, it can induce the conversion of cytosine to uracil in the minus-sense single-strand viral DNA, leading to G-to-A hypermutations in the subsequent plus-strand viral DNA. The resultant detrimental levels of mutations in the proviral genome, along with a deamination-independent mechanism that works prior to the proviral integration, together exert efficient antiretroviral effects in infected target cells. Selectively targets single-stranded DNA and does not deaminate double-stranded DNA or single- or double-stranded RNA. The protein is DNA dC-&gt;dU-editing enzyme APOBEC-3G (APOBEC3G) of Pongo pygmaeus (Bornean orangutan).